Consider the following 931-residue polypeptide: Probable UDP-N-acetylglucosamine--peptide N-acetylglucosaminyltransferase SPINDLY (931 aa).

Positions 1-15 (MAWTEKDVENGKESE) are enriched in basic and acidic residues. Positions 1 to 38 (MAWTEKDVENGKESESLGNNGFLKGGQSSSGSKGSPGR) are disordered. Over residues 25-37 (GGQSSSGSKGSPG) the composition is skewed to low complexity. TPR repeat units follow at residues 48–81 (DKDA…DSKS), 82–115 (IESL…DPQN), 116–149 (ACAL…DPSY), 157–190 (AIVL…DSHY), 191–224 (APAY…RPMY), 225–258 (AEAY…SPNF), 266–299 (AIAL…NWHY), 300–333 (ADAM…NPHC), 334–367 (AEAC…KPNF), 369–401 (QSLN…NPTY), and 402–435 (AEAY…DPDS). Residues 436 to 931 (RNAGQNRLLA…NHNGNHGNLS (496 aa)) are catalytic region. A compositionally biased stretch (low complexity) spans 864 to 884 (QQQQTQTESVVPEESSVNPSE). The segment at 864-931 (QQQQTQTESV…NHNGNHGNLS (68 aa)) is disordered. Residues 910 to 931 (KSSTSEENGVQSNHNGNHGNLS) show a composition bias toward polar residues.

This sequence belongs to the glycosyltransferase 41 family. O-GlcNAc transferase subfamily.

It is found in the nucleus. It carries out the reaction L-seryl-[protein] + UDP-N-acetyl-alpha-D-glucosamine = 3-O-(N-acetyl-beta-D-glucosaminyl)-L-seryl-[protein] + UDP + H(+). The catalysed reaction is L-threonyl-[protein] + UDP-N-acetyl-alpha-D-glucosamine = 3-O-(N-acetyl-beta-D-glucosaminyl)-L-threonyl-[protein] + UDP + H(+). It participates in protein modification; protein glycosylation. Probable O-linked N-acetylglucosamine transferase (OGT) involved in various processes such as gibberellin (GA) signaling pathway. OGTs catalyze the addition of nucleotide-activated sugars directly onto the polypeptide through O-glycosidic linkage with the hydroxyl of serine or threonine. Probably acts by adding O-linked sugars to yet unknown proteins. The chain is Probable UDP-N-acetylglucosamine--peptide N-acetylglucosaminyltransferase SPINDLY (SPY) from Solanum lycopersicum (Tomato).